Reading from the N-terminus, the 306-residue chain is ADP-polyphosphate phosphotransferase 2 (306 aa).

It belongs to the polyphosphate kinase 2 (PPK2) family. Class I subfamily.

It carries out the reaction [phosphate](n) + ATP = [phosphate](n+1) + ADP. It catalyses the reaction [phosphate](n) + GTP = [phosphate](n+1) + GDP. Its function is as follows. Uses inorganic polyphosphate (polyP) as a donor to convert ADP to ATP. Can also convert GDP to GTP, with lower efficiency. The sequence is that of ADP-polyphosphate phosphotransferase 2 from Rhizobium meliloti (strain 1021) (Ensifer meliloti).